We begin with the raw amino-acid sequence, 362 residues long: Anthranilate phosphoribosyltransferase 2 (362 aa).

5-phospho-alpha-D-ribose 1-diphosphate contacts are provided by residues Gly103, 106–107 (GD), Thr111, 113–116 (NIST), 131–139 (KHGNRSASS), and Ser143. Anthranilate is bound at residue Gly103. Residue Ser115 coordinates Mg(2+). Asn134 provides a ligand contact to anthranilate. Arg189 is a binding site for anthranilate. Residues Asp248 and Glu249 each contribute to the Mg(2+) site.

Belongs to the anthranilate phosphoribosyltransferase family. As to quaternary structure, homodimer. The cofactor is Mg(2+).

It carries out the reaction N-(5-phospho-beta-D-ribosyl)anthranilate + diphosphate = 5-phospho-alpha-D-ribose 1-diphosphate + anthranilate. It participates in amino-acid biosynthesis; L-tryptophan biosynthesis; L-tryptophan from chorismate: step 2/5. In terms of biological role, catalyzes the transfer of the phosphoribosyl group of 5-phosphorylribose-1-pyrophosphate (PRPP) to anthranilate to yield N-(5'-phosphoribosyl)-anthranilate (PRA). The chain is Anthranilate phosphoribosyltransferase 2 from Nostoc sp. (strain PCC 7120 / SAG 25.82 / UTEX 2576).